The sequence spans 1647 residues: Ras GTPase-activating-like protein IQG1 (1647 aa).

Residues 18-51 (DTTATTTTTTTSNVLQPSNRLNSPTKFNRKSLDN) form a disordered region. Positions 19 to 28 (TTATTTTTTT) are enriched in low complexity. Positions 29 to 43 (SNVLQPSNRLNSPTK) are enriched in polar residues. Serine 48 carries the phosphoserine modification. Residues threonine 66, threonine 72, and threonine 82 each carry the phosphothreonine modification. Phosphoserine is present on residues serine 83, serine 91, and serine 139. Residues 143 to 162 (FNTQSNVHTPLKQLNQPIGT) show a composition bias toward polar residues. The tract at residues 143–175 (FNTQSNVHTPLKQLNQPIGTPSSSSLSPAKNAS) is disordered. A compositionally biased stretch (low complexity) spans 163–175 (PSSSSLSPAKNAS). Residues serine 165, serine 167, and serine 169 each carry the phosphoserine modification. The region spanning 184–291 (LCRIEAIKQW…FCLHALSYIL (108 aa)) is the Calponin-homology (CH) domain. Positions 326 to 427 (PLPNFSSADT…STSNAKLELH (102 aa)) are disordered. Over residues 342–355 (TSNNNSSTTSATAA) the composition is skewed to low complexity. Threonine 367 bears the Phosphothreonine mark. Residues 368–379 (PSPLKRPQQLQK) are compositionally biased toward low complexity. At serine 369 the chain carries Phosphoserine. 2 stretches are compositionally biased toward basic and acidic residues: residues 380-392 (KQLELVEDNKPEL) and 402-413 (ISRDDPFTDRVD). Phosphoserine is present on residues serine 433 and serine 440. IQ domains follow at residues 467–478 (FQSLARGAVFRY), 528–539 (LQSIIRKNFVIN), 556–567 (LQSLIRGKLTRD), 586–597 (FQSLVRMKSIYS), 616–627 (LQSIARSQLYHR), 642–653 (IQSIIRRNAVIE), 672–683 (LQSIARGGVART), 734–745 (VQTLFRGVLSRY), and 764–775 (LQSVARGKLMRG). Residues 841-919 (LSDLKDLIIE…KKIELWQTLF (79 aa)) adopt a coiled-coil conformation. Residues 958–1223 (PVRDSSITYH…DTVKSIISQA (266 aa)) form the Ras-GAP domain. 5 positions are modified to phosphoserine: serine 1064, serine 1068, serine 1088, serine 1383, and serine 1385.

Interacts with myosin MYO1 and its light chain MLC1. Interacts with BNI1. Interacts with BNR1. Interacts with CLB2. Interacts with CLB4. Interacts with CDC28. Post-translationally, hyperphosphorylated. Phosphorylation is cell cycle-dependent and peaks at the time of cytokinesis. Contains 21 consensus sites for cyclin-dependent kinases (CDKs). At least some of them are phosphorylated by the CLB2-CDC28 kinase complex. Mutation of 15 of the phosphorylation sites to Ala caused both premature assembly and delayed disassembly of the actomyosin ring, blocked interaction with the actin-nucleating proteins BNI1 and BNR1, and resulted in defects in cytokinesis.

The protein resides in the bud neck. Required for the assembly and the contraction of the actomyosin ring at the bud neck during cytokinesis. This is Ras GTPase-activating-like protein IQG1 (IQG1) from Candida albicans (strain SC5314 / ATCC MYA-2876) (Yeast).